The sequence spans 117 residues: Ribosome-binding factor A (117 aa).

The protein belongs to the RbfA family. Monomer. Binds 30S ribosomal subunits, but not 50S ribosomal subunits or 70S ribosomes.

The protein resides in the cytoplasm. One of several proteins that assist in the late maturation steps of the functional core of the 30S ribosomal subunit. Associates with free 30S ribosomal subunits (but not with 30S subunits that are part of 70S ribosomes or polysomes). Required for efficient processing of 16S rRNA. May interact with the 5'-terminal helix region of 16S rRNA. This chain is Ribosome-binding factor A, found in Blochmanniella floridana.